The chain runs to 518 residues: Putative succinate-semialdehyde dehydrogenase [NADP(+)] 2 (518 aa).

NADP(+) contacts are provided by residues 157–158 (WN), 181–184 (KPDS), and 232–233 (GS). E254 (proton acceptor) is an active-site residue. L255 contacts NADP(+). C288 acts as the Nucleophile in catalysis. E386 serves as a coordination point for NADP(+).

This sequence belongs to the aldehyde dehydrogenase family.

It carries out the reaction succinate semialdehyde + NADP(+) + H2O = succinate + NADPH + 2 H(+). Its function is as follows. Catalyzes the NADP(+)-dependent oxidation of succinate semialdehyde to succinate. Although it has succinate semialdehyde dehydrogenase activity, is likely to act physiologically on a different aldehyde(s). This chain is Putative succinate-semialdehyde dehydrogenase [NADP(+)] 2 (gabD2), found in Mycobacterium ulcerans (strain Agy99).